Reading from the N-terminus, the 132-residue chain is UPF0102 protein Acid_2433 (132 aa).

Belongs to the UPF0102 family.

The sequence is that of UPF0102 protein Acid_2433 from Solibacter usitatus (strain Ellin6076).